The chain runs to 399 residues: Elongation factor Tu (399 aa).

The tr-type G domain occupies 10 to 207 (KPHLNIGTIG…AVDNYVPEPQ (198 aa)). Positions 19–26 (GHIDHGKT) are G1. A GTP-binding site is contributed by 19-26 (GHIDHGKT). Mg(2+) is bound at residue T26. Residues 60-64 (GITIN) are G2. The G3 stretch occupies residues 81–84 (DCPG). Residues 81–85 (DCPGH) and 136–139 (NKVD) each bind GTP. Residues 136–139 (NKVD) form a G4 region. The segment at 174 to 176 (SAL) is G5.

Belongs to the TRAFAC class translation factor GTPase superfamily. Classic translation factor GTPase family. EF-Tu/EF-1A subfamily. As to quaternary structure, monomer.

It is found in the cytoplasm. The enzyme catalyses GTP + H2O = GDP + phosphate + H(+). Functionally, GTP hydrolase that promotes the GTP-dependent binding of aminoacyl-tRNA to the A-site of ribosomes during protein biosynthesis. The chain is Elongation factor Tu from Kosmotoga olearia (strain ATCC BAA-1733 / DSM 21960 / TBF 19.5.1).